The chain runs to 44 residues: Photosystem I reaction center subunit IX (44 aa).

A helical transmembrane segment spans residues 7-27 (YLSVAPVLSTLWFGALAGLLI).

Belongs to the PsaJ family.

The protein localises to the plastid. It is found in the chloroplast thylakoid membrane. May help in the organization of the PsaE and PsaF subunits. The sequence is that of Photosystem I reaction center subunit IX from Solanum bulbocastanum (Wild potato).